The sequence spans 2099 residues: Dedicator of cytokinesis protein 8 (2099 aa).

Phosphoserine occurs at positions 20, 139, and 451. In terms of domain architecture, C2 DOCK-type spans 560-729; the sequence is RNLLYVYPQR…GVFNIEVQAV (170 aa). Phosphoserine occurs at positions 904, 936, 1145, and 1243. The DOCKER domain occupies 1632–2066; that stretch reads KSYQASPDLR…LRPMIERKIP (435 aa). Ser2087 carries the phosphoserine modification.

This sequence belongs to the DOCK family. In terms of assembly, interacts (via DOCKER domain) with GTPase CDC42; the interaction activates CDC42 by exchanging GDP for GTP. The unphosphorylated form interacts (via DOCKER domain) with LRCH1 (via LRR repeats); the interaction prevents the association between DOCK8 and CDC42. Interacts with CCDC88B. In response to chemokine CXCL12/SDF-1-alpha stimulation, phosphorylated by PRKCA/PKC-alpha which promotes DOCK8 dissociation from LRCH1. As to expression, expressed in peripheral blood mononuclear cells (PBMCs).

The protein localises to the cytoplasm. It localises to the cell membrane. It is found in the cell projection. The protein resides in the lamellipodium membrane. Functionally, guanine nucleotide exchange factor (GEF) which specifically activates small GTPase CDC42 by exchanging bound GDP for free GTP. During immune responses, required for interstitial dendritic cell (DC) migration by locally activating CDC42 at the leading edge membrane of DC. Required for CD4(+) T-cell migration in response to chemokine stimulation by promoting CDC42 activation at T cell leading edge membrane. Is involved in NK cell cytotoxicity by controlling polarization of microtubule-organizing center (MTOC), and possibly regulating CCDC88B-mediated lytic granule transport to MTOC during cell killing. In Homo sapiens (Human), this protein is Dedicator of cytokinesis protein 8 (DOCK8).